A 177-amino-acid chain; its full sequence is uncharacterized protein (177 aa).

This is an uncharacterized protein from Treponema pallidum (strain Nichols).